The following is a 576-amino-acid chain: NADH-quinone oxidoreductase subunit C/D (576 aa).

Positions 1 to 176 (MAWISLEKAK…NLEGLFNYDR (176 aa)) are NADH dehydrogenase I subunit C. The NADH dehydrogenase I subunit D stretch occupies residues 200–576 (SQIVLNWGPL…IDPVVGETDR (377 aa)).

In the N-terminal section; belongs to the complex I 30 kDa subunit family. This sequence in the C-terminal section; belongs to the complex I 49 kDa subunit family. In terms of assembly, NDH-1 is composed of 13 different subunits. Subunits NuoB, CD, E, F, and G constitute the peripheral sector of the complex.

Its subcellular location is the cell inner membrane. The enzyme catalyses a quinone + NADH + 5 H(+)(in) = a quinol + NAD(+) + 4 H(+)(out). NDH-1 shuttles electrons from NADH, via FMN and iron-sulfur (Fe-S) centers, to quinones in the respiratory chain. The immediate electron acceptor for the enzyme in this species is believed to be ubiquinone. Couples the redox reaction to proton translocation (for every two electrons transferred, four hydrogen ions are translocated across the cytoplasmic membrane), and thus conserves the redox energy in a proton gradient. The protein is NADH-quinone oxidoreductase subunit C/D of Sulfurihydrogenibium sp. (strain YO3AOP1).